Here is a 392-residue protein sequence, read N- to C-terminus: Sex-determining region Y protein (392 aa).

Positions H4–K81 are sufficient for interaction with KPNB1. The segment at residues V5–K73 is a DNA-binding region (HMG box). Required for nuclear localization stretches follow at residues K6–K22 and Q75–K81. The tract at residues R52–Q84 is sufficient for interaction with EP300. K81 carries the post-translational modification N6-acetyllysine. The tract at residues A92–Q144 is necessary for interaction with ZNF208 isoform KRAB-O. The necessary for interaction with SLC9A3R2 and nuclear accumulation of SLC9A3R2 stretch occupies residues A94 to I138. The interval H142–Q361 is disordered. Residues Q144–Q181 are compositionally biased toward low complexity. Composition is skewed to basic and acidic residues over residues F182 to Q197 and Q210 to Q228. Over residues Q229–Q238 the composition is skewed to low complexity. Composition is skewed to basic and acidic residues over residues F239 to H250, F261 to P295, and Q313 to Q349. The segment covering Q350–Q361 has biased composition (low complexity).

The protein belongs to the SRY family. In terms of assembly, interacts with KPNB1, ZNF208 isoform KRAB-O, PARP1 and SLC9A3R2. The interaction with KPNB1 is sensitive to dissociation by Ran in the GTP-bound form. Interaction with PARP1 impaired its DNA-binding activity. Interacts with CALM, EP300, HDAC3 and WT1. The interaction with EP300 modulates its DNA-binding activity. Post-translationally, degraded due to the presence of a degron at the C-terminus that promotes its degradation. Phosphorylated on serine residues by PKA. Phosphorylation by PKA enhances its DNA-binding activity and stimulates transcription repression. In terms of processing, acetylation of Lys-81 contributes to its nuclear localization and enhances its interaction with KPNB1. Post-translationally, poly-ADP-ribosylated by PARP1. ADP-ribosylation reduces its DNA-binding activity. As to expression, expressed in gonadal somatic pre-Sertoli cells. Expressed in the substantia nigra of the brain (at protein level). Expressed in diencephalon, cortex, the substantia nigra of the midbrain and the medial mammillary bodies of the hypothalamus of male, but not female. Expressed in gonadal somatic pre-Sertoli cells. While it is expressed at lower level compared to isoform Sry-S, this form is more stable and constitutes the predominant protein product of the Sry locus in XY gonads (at protein level).

Its subcellular location is the nucleus speckle. The protein resides in the cytoplasm. It localises to the nucleus. Transcriptional regulator that controls a genetic switch in male development. It is necessary and sufficient for initiating male sex determination by directing the development of supporting cell precursors (pre-Sertoli cells) as Sertoli rather than granulosa cells. Involved in different aspects of gene regulation including promoter activation or repression. Binds to the DNA consensus sequence 5'-[AT]AACAA[AT]-3'. SRY HMG box recognizes DNA by partial intercalation in the minor groove and promotes DNA bending. Also involved in pre-mRNA splicing. In male adult brain involved in the maintenance of motor functions of dopaminergic neurons. Functionally, constitutes the major isoform, which is necessary and sufficient for initiating male sex determination. In terms of biological role, constitutes a minor isoform, which is unstable due to the presence of a degron at the C-terminus that promotes its degradation. Not necessary and sufficient for initiating male sex determination. This Mus musculus (Mouse) protein is Sex-determining region Y protein.